A 653-amino-acid chain; its full sequence is TRAF3-interacting protein 1 (653 aa).

The abolishes microtubules binding when missing stretch occupies residues 1-306; sequence MNAAVVRRTQ…ADKSEKKADI (306 aa). The interval 134–467 is disordered; that stretch reads GDSRGRVLRT…DSQNSDNEDD (334 aa). 3 stretches are compositionally biased toward basic and acidic residues: residues 145 to 305, 325 to 335, and 370 to 384; these read KAQE…KKAD, NSLEGRKEDNI, and ENAE…KGDS. The tract at residues 229–653 is DISC1-interaction domain; the sequence is RAKQDRDRNN…VHSINLSSRR (425 aa). Position 437 is a phosphoserine (Ser437). Over residues 448–462 the composition is skewed to polar residues; that stretch reads SGKTVSTVIIDSQNS. The stretch at 533-628 forms a coiled coil; sequence AWKKEKDIVS…IKDQQDKICA (96 aa).

This sequence belongs to the TRAF3IP1 family. Component of the IFT complex B, at least composed of IFT20, IFT22, IFT25, IFT27, IFT46, IFT52, TRAF3IP1/IFT54, IFT57, IFT74, IFT80, IFT81, and IFT88. Interacts with IFT88. Interacts with IL13RA1. Binds to microtubules, TRAF3 and DISC1. Interacts with MAP4.

Its subcellular location is the cytoplasm. It localises to the cytoskeleton. The protein localises to the cell projection. It is found in the cilium. The protein resides in the cilium axoneme. Its subcellular location is the cilium basal body. Its function is as follows. Plays an inhibitory role on IL13 signaling by binding to IL13RA1. Involved in suppression of IL13-induced STAT6 phosphorylation, transcriptional activity and DNA-binding. Recruits TRAF3 and DISC1 to the microtubules. Involved in kidney development and epithelial morphogenesis. Involved in the regulation of microtubule cytoskeleton organization. Is a negative regulator of microtubule stability, acting through the control of MAP4 levels. Involved in ciliogenesis. The polypeptide is TRAF3-interacting protein 1 (Traf3ip1) (Rattus norvegicus (Rat)).